A 230-amino-acid chain; its full sequence is Gilatoxin (230 aa).

Residues 1 to 230 (IIGGQECDET…ISFLFWIQSI (230 aa)) enclose the Peptidase S1 domain. Intrachain disulfides connect C7–C146, C26–C42, C125–C193, C157–C172, and C183–C208. H41 (charge relay system) is an active-site residue. N-linked (GlcNAc...) asparagine glycosylation occurs at N84. D93 (charge relay system) is an active-site residue. S187 functions as the Charge relay system in the catalytic mechanism.

The protein belongs to the peptidase S1 family. Extensively glycosylated, contains approximately 8 mol of monosaccharide per mol of toxin. As to expression, expressed by the mandibular venom gland.

The protein localises to the secreted. Functionally, has kallikrein-like activity, releases bradykinin from kininogen. Catalyzes the hydrolysis of various arginine ester substrates for trypsin and thrombin and degrades both angiotensin I and II by cleavage of the dipeptide Asp-Arg from the NH2-terminal end. Fibrinogen is also degraded but a fibrin clot is not produced. May have a potentiating effect on potent hemorrhagic toxins present in the venom. The sequence is that of Gilatoxin from Heloderma horridum horridum (Mexican beaded lizard).